Consider the following 372-residue polypeptide: Aminomethyltransferase (372 aa).

The protein belongs to the GcvT family. In terms of assembly, the glycine cleavage system is composed of four proteins: P, T, L and H.

The catalysed reaction is N(6)-[(R)-S(8)-aminomethyldihydrolipoyl]-L-lysyl-[protein] + (6S)-5,6,7,8-tetrahydrofolate = N(6)-[(R)-dihydrolipoyl]-L-lysyl-[protein] + (6R)-5,10-methylene-5,6,7,8-tetrahydrofolate + NH4(+). Functionally, the glycine cleavage system catalyzes the degradation of glycine. This chain is Aminomethyltransferase, found in Burkholderia multivorans (strain ATCC 17616 / 249).